The chain runs to 137 residues: Phosphoribosyl-AMP cyclohydrolase (137 aa).

Aspartate 84 is a binding site for Mg(2+). Residue cysteine 85 participates in Zn(2+) binding. Mg(2+) contacts are provided by aspartate 86 and aspartate 88. Zn(2+)-binding residues include cysteine 101 and cysteine 108.

The protein belongs to the PRA-CH family. As to quaternary structure, homodimer. Requires Mg(2+) as cofactor. Zn(2+) serves as cofactor.

The protein resides in the cytoplasm. It carries out the reaction 1-(5-phospho-beta-D-ribosyl)-5'-AMP + H2O = 1-(5-phospho-beta-D-ribosyl)-5-[(5-phospho-beta-D-ribosylamino)methylideneamino]imidazole-4-carboxamide. It participates in amino-acid biosynthesis; L-histidine biosynthesis; L-histidine from 5-phospho-alpha-D-ribose 1-diphosphate: step 3/9. Its function is as follows. Catalyzes the hydrolysis of the adenine ring of phosphoribosyl-AMP. The chain is Phosphoribosyl-AMP cyclohydrolase from Chlorobium chlorochromatii (strain CaD3).